Reading from the N-terminus, the 201-residue chain is Ran-specific GTPase-activating protein 1 (201 aa).

Basic and acidic residues-rich tracts occupy residues 1–17 (MSSEDKKPVVDKKEEAA) and 32–66 (KKAEKPETKKDEEDTKEETKKEGDDAPESPDIHFE). A disordered region spans residues 1–66 (MSSEDKKPVV…APESPDIHFE (66 aa)). Residue S60 is modified to Phosphoserine. A RanBD1 domain is found at 64 to 200 (HFEPVVHLEK…FEKAQEINKK (137 aa)).

This sequence belongs to the RANBP1 family. As to quaternary structure, interacts with GSP1 and PRP20.

It localises to the cytoplasm. The protein localises to the nucleus. In terms of biological role, important for the export of protein containing nuclear export signal (NES) out of the nucleus. Stimulates the GTPase activity of GSP1 and GSP2. This Saccharomyces cerevisiae (strain ATCC 204508 / S288c) (Baker's yeast) protein is Ran-specific GTPase-activating protein 1 (YRB1).